Reading from the N-terminus, the 675-residue chain is DNA ligase (675 aa).

Residues 41-45, 90-91, and E120 each bind NAD(+); these read DAEYD and SL. The active-site N6-AMP-lysine intermediate is the K122. NAD(+) contacts are provided by R143, E178, K295, and K319. 4 residues coordinate Zn(2+): C413, C416, C431, and C436. The 80-residue stretch at 596-675 folds into the BRCT domain; sequence GVPQTFAGKT…ADFLQLIDRV (80 aa).

Belongs to the NAD-dependent DNA ligase family. LigA subfamily. The cofactor is Mg(2+). Mn(2+) serves as cofactor.

The enzyme catalyses NAD(+) + (deoxyribonucleotide)n-3'-hydroxyl + 5'-phospho-(deoxyribonucleotide)m = (deoxyribonucleotide)n+m + AMP + beta-nicotinamide D-nucleotide.. Functionally, DNA ligase that catalyzes the formation of phosphodiester linkages between 5'-phosphoryl and 3'-hydroxyl groups in double-stranded DNA using NAD as a coenzyme and as the energy source for the reaction. It is essential for DNA replication and repair of damaged DNA. The sequence is that of DNA ligase from Heliobacterium modesticaldum (strain ATCC 51547 / Ice1).